We begin with the raw amino-acid sequence, 446 residues long: Tektin-4 (446 aa).

3 coiled-coil regions span residues 182 to 215 (IRNV…MDYS), 297 to 346 (DAIA…NDKS), and 378 to 422 (SEVG…ANSI).

It belongs to the tektin family.

It is found in the cytoplasm. The protein localises to the cytoskeleton. The protein resides in the cilium axoneme. Its subcellular location is the cell projection. It localises to the cilium. It is found in the flagellum. In terms of biological role, microtubule inner protein (MIP) part of the dynein-decorated doublet microtubules (DMTs) in cilia and flagellar axoneme. Forms filamentous polymers in the walls of ciliary and flagellar microtubules. Contributes to normal sperm motility. In Xenopus laevis (African clawed frog), this protein is Tektin-4 (tekt4).